The chain runs to 188 residues: UPF0301 protein XOO1309 (188 aa).

It belongs to the UPF0301 (AlgH) family.

The chain is UPF0301 protein XOO1309 from Xanthomonas oryzae pv. oryzae (strain MAFF 311018).